The chain runs to 58 residues: Ribosome modulation factor (58 aa).

Belongs to the ribosome modulation factor family.

Its subcellular location is the cytoplasm. Its function is as follows. During stationary phase, converts 70S ribosomes to an inactive dimeric form (100S ribosomes). This chain is Ribosome modulation factor, found in Tolumonas auensis (strain DSM 9187 / NBRC 110442 / TA 4).